A 215-amino-acid chain; its full sequence is ATP phosphoribosyltransferase (215 aa).

This sequence belongs to the ATP phosphoribosyltransferase family. Short subfamily. In terms of assembly, heteromultimer composed of HisG and HisZ subunits.

The protein localises to the cytoplasm. The catalysed reaction is 1-(5-phospho-beta-D-ribosyl)-ATP + diphosphate = 5-phospho-alpha-D-ribose 1-diphosphate + ATP. It participates in amino-acid biosynthesis; L-histidine biosynthesis; L-histidine from 5-phospho-alpha-D-ribose 1-diphosphate: step 1/9. Catalyzes the condensation of ATP and 5-phosphoribose 1-diphosphate to form N'-(5'-phosphoribosyl)-ATP (PR-ATP). Has a crucial role in the pathway because the rate of histidine biosynthesis seems to be controlled primarily by regulation of HisG enzymatic activity. The polypeptide is ATP phosphoribosyltransferase (Acidithiobacillus ferrooxidans (strain ATCC 23270 / DSM 14882 / CIP 104768 / NCIMB 8455) (Ferrobacillus ferrooxidans (strain ATCC 23270))).